A 637-amino-acid polypeptide reads, in one-letter code: Phosphomethylpyrimidine synthase (637 aa).

Residues asparagine 242, methionine 271, tyrosine 300, histidine 336, 356 to 358 (SRG), 397 to 400 (DGLR), and glutamate 436 each bind substrate. Residue histidine 440 coordinates Zn(2+). Tyrosine 463 is a substrate binding site. Residue histidine 504 participates in Zn(2+) binding. Residues cysteine 584, cysteine 587, and cysteine 592 each coordinate [4Fe-4S] cluster.

It belongs to the ThiC family. In terms of assembly, homodimer. The cofactor is [4Fe-4S] cluster.

It carries out the reaction 5-amino-1-(5-phospho-beta-D-ribosyl)imidazole + S-adenosyl-L-methionine = 4-amino-2-methyl-5-(phosphooxymethyl)pyrimidine + CO + 5'-deoxyadenosine + formate + L-methionine + 3 H(+). It functions in the pathway cofactor biosynthesis; thiamine diphosphate biosynthesis. Catalyzes the synthesis of the hydroxymethylpyrimidine phosphate (HMP-P) moiety of thiamine from aminoimidazole ribotide (AIR) in a radical S-adenosyl-L-methionine (SAM)-dependent reaction. This is Phosphomethylpyrimidine synthase from Bordetella avium (strain 197N).